The primary structure comprises 384 residues: UDP-N-acetylglucosamine--N-acetylmuramyl-(pentapeptide) pyrophosphoryl-undecaprenol N-acetylglucosamine transferase (384 aa).

UDP-N-acetyl-alpha-D-glucosamine is bound by residues 22-24 (TGG), Arg-179, Ser-209, and Gln-312.

Belongs to the glycosyltransferase 28 family. MurG subfamily.

It is found in the cell inner membrane. It catalyses the reaction di-trans,octa-cis-undecaprenyl diphospho-N-acetyl-alpha-D-muramoyl-L-alanyl-D-glutamyl-meso-2,6-diaminopimeloyl-D-alanyl-D-alanine + UDP-N-acetyl-alpha-D-glucosamine = di-trans,octa-cis-undecaprenyl diphospho-[N-acetyl-alpha-D-glucosaminyl-(1-&gt;4)]-N-acetyl-alpha-D-muramoyl-L-alanyl-D-glutamyl-meso-2,6-diaminopimeloyl-D-alanyl-D-alanine + UDP + H(+). Its pathway is cell wall biogenesis; peptidoglycan biosynthesis. Functionally, cell wall formation. Catalyzes the transfer of a GlcNAc subunit on undecaprenyl-pyrophosphoryl-MurNAc-pentapeptide (lipid intermediate I) to form undecaprenyl-pyrophosphoryl-MurNAc-(pentapeptide)GlcNAc (lipid intermediate II). The chain is UDP-N-acetylglucosamine--N-acetylmuramyl-(pentapeptide) pyrophosphoryl-undecaprenol N-acetylglucosamine transferase from Treponema pallidum (strain Nichols).